A 648-amino-acid polypeptide reads, in one-letter code: Replication restart protein PriA (648 aa).

In terms of domain architecture, Helicase ATP-binding spans 131–297; that stretch reads TIFNESNKPT…KTHKYQLVTL (167 aa). 144-151 serves as a coordination point for ATP; it reads GVTGSGKT. The DEAH box motif lies at 240–243; that stretch reads DEEH. 8 residues coordinate Zn(2+): cysteine 358, cysteine 361, cysteine 367, cysteine 370, cysteine 385, cysteine 388, cysteine 398, and cysteine 401. One can recognise a Helicase C-terminal domain in the interval 393–548; sequence KIFSSCPECL…SFFTNELEIR (156 aa).

This sequence belongs to the helicase family. PriA subfamily. As to quaternary structure, component of the replication restart primosome. It depends on Zn(2+) as a cofactor.

It catalyses the reaction Couples ATP hydrolysis with the unwinding of duplex DNA by translocating in the 3'-5' direction.. It carries out the reaction ATP + H2O = ADP + phosphate + H(+). In terms of biological role, initiates the restart of stalled replication forks, which reloads the replicative helicase on sites other than the origin of replication. Recognizes and binds to abandoned replication forks and remodels them to uncover a helicase loading site. Promotes assembly of the primosome at these replication forks. This chain is Replication restart protein PriA, found in Rickettsia typhi (strain ATCC VR-144 / Wilmington).